Here is an 88-residue protein sequence, read N- to C-terminus: KTx type I (88 aa).

Residues 1–19 form the signal peptide; the sequence is MKTTLVVVVLACIVALTSA. In terms of domain architecture, ShKT spans 54–88; sequence CKDVLSEFSCGVLKKDGQCNKADIQAKCKLTCDKC. 3 disulfide bridges follow: C54–C88, C63–C81, and C72–C85.

It belongs to the sea anemone type 1 potassium channel toxin family. As to expression, expressed both outside and in acontia, a specialised envenomation structure laden with batteries of venom-containing nematocysts found only in the superfamily Metridioidea.

The protein localises to the secreted. It localises to the nematocyst. In terms of biological role, inhibits voltage-gated potassium channels (Kv1/KCNA). The sequence is that of KTx type I from Calliactis polypus (Hermit crab anemone).